Here is a 507-residue protein sequence, read N- to C-terminus: Glycerol kinase 1 (507 aa).

An ADP-binding site is contributed by Thr12. Positions 12, 13, and 14 each coordinate ATP. Thr12 is a sn-glycerol 3-phosphate binding site. An ADP-binding site is contributed by Arg16. Residues Arg82, Glu83, Tyr134, and Asp249 each coordinate sn-glycerol 3-phosphate. Residues Arg82, Glu83, Tyr134, Asp249, and Gln250 each contribute to the glycerol site. 2 residues coordinate ADP: Thr271 and Gly315. ATP is bound by residues Thr271, Gly315, Gln319, and Gly416. The ADP site is built by Gly416 and Asn420.

The protein belongs to the FGGY kinase family.

The enzyme catalyses glycerol + ATP = sn-glycerol 3-phosphate + ADP + H(+). Its pathway is polyol metabolism; glycerol degradation via glycerol kinase pathway; sn-glycerol 3-phosphate from glycerol: step 1/1. Inhibited by fructose 1,6-bisphosphate (FBP). Functionally, key enzyme in the regulation of glycerol uptake and metabolism. Catalyzes the phosphorylation of glycerol to yield sn-glycerol 3-phosphate. The polypeptide is Glycerol kinase 1 (Streptomyces coelicolor (strain ATCC BAA-471 / A3(2) / M145)).